The chain runs to 512 residues: Cytochrome P450 72A13 (512 aa).

A helical membrane pass occupies residues 2-22 (EISVASVTVSVAVVVVSWWVW). Cys-460 contributes to the heme binding site.

Belongs to the cytochrome P450 family. Heme is required as a cofactor.

Its subcellular location is the membrane. The protein is Cytochrome P450 72A13 (CYP72A13) of Arabidopsis thaliana (Mouse-ear cress).